We begin with the raw amino-acid sequence, 247 residues long: MSKLFWAMLSFITRLPVPRRWSQGLDFEHYSRGIITFPLIGLLLGAISGLVFMVLQAWCGVPLAALFSVLVLALMTGGFHLDGLADTCDGVFSARSRDRMLEIMRDSRLGTHGGLALIFVVLAKILVLSELALRGEPILASLAAACAVSRGIAALLMYRHRYAREEGLGNVFIGKIDGRQTCVTLGLAAIFAAVLLPGMHGVAAMVVTMVAIFILGQLLKRTLGGQTGDTLGAAIELGELVFLLALL.

5 consecutive transmembrane segments (helical) span residues 34 to 54 (IITFPLIGLLLGAISGLVFMV), 59 to 79 (CGVPLAALFSVLVLALMTGGF), 113 to 133 (GGLALIFVVLAKILVLSELAL), 138 to 158 (ILASLAAACAVSRGIAALLMY), and 194 to 214 (VLLPGMHGVAAMVVTMVAIFI).

Belongs to the CobS family. The cofactor is Mg(2+).

It localises to the cell inner membrane. The enzyme catalyses alpha-ribazole + adenosylcob(III)inamide-GDP = adenosylcob(III)alamin + GMP + H(+). It carries out the reaction alpha-ribazole 5'-phosphate + adenosylcob(III)inamide-GDP = adenosylcob(III)alamin 5'-phosphate + GMP + H(+). It participates in cofactor biosynthesis; adenosylcobalamin biosynthesis; adenosylcobalamin from cob(II)yrinate a,c-diamide: step 7/7. Its function is as follows. Joins adenosylcobinamide-GDP and alpha-ribazole to generate adenosylcobalamin (Ado-cobalamin). Also synthesizes adenosylcobalamin 5'-phosphate from adenosylcobinamide-GDP and alpha-ribazole 5'-phosphate. The chain is Adenosylcobinamide-GDP ribazoletransferase from Shigella dysenteriae serotype 1 (strain Sd197).